Reading from the N-terminus, the 79-residue chain is D-alanyl carrier protein (79 aa).

The Carrier domain occupies 1 to 77 (MSIEETVIEL…KIVQGVEELQ (77 aa)). Ser35 carries the post-translational modification O-(pantetheine 4'-phosphoryl)serine.

The protein belongs to the DltC family. In terms of processing, 4'-phosphopantetheine is transferred from CoA to a specific serine of apo-DCP.

The protein localises to the cytoplasm. Its pathway is cell wall biogenesis; lipoteichoic acid biosynthesis. Carrier protein involved in the D-alanylation of lipoteichoic acid (LTA). The loading of thioester-linked D-alanine onto DltC is catalyzed by D-alanine--D-alanyl carrier protein ligase DltA. The DltC-carried D-alanyl group is further transferred to cell membrane phosphatidylglycerol (PG) by forming an ester bond, probably catalyzed by DltD. D-alanylation of LTA plays an important role in modulating the properties of the cell wall in Gram-positive bacteria, influencing the net charge of the cell wall. This chain is D-alanyl carrier protein, found in Streptococcus pyogenes serotype M1.